Here is a 385-residue protein sequence, read N- to C-terminus: 8-amino-7-oxononanoate synthase (385 aa).

Arg21 lines the substrate pocket. Position 108–109 (108–109 (GF)) interacts with pyridoxal 5'-phosphate. His133 is a binding site for substrate. 3 residues coordinate pyridoxal 5'-phosphate: Ser179, His207, and Thr233. Position 236 is an N6-(pyridoxal phosphate)lysine (Lys236). Thr352 lines the substrate pocket.

Belongs to the class-II pyridoxal-phosphate-dependent aminotransferase family. BioF subfamily. Homodimer. Pyridoxal 5'-phosphate is required as a cofactor.

The catalysed reaction is 6-carboxyhexanoyl-[ACP] + L-alanine + H(+) = (8S)-8-amino-7-oxononanoate + holo-[ACP] + CO2. It functions in the pathway cofactor biosynthesis; biotin biosynthesis. Functionally, catalyzes the decarboxylative condensation of pimeloyl-[acyl-carrier protein] and L-alanine to produce 8-amino-7-oxononanoate (AON), [acyl-carrier protein], and carbon dioxide. This is 8-amino-7-oxononanoate synthase from Pseudescherichia vulneris (Escherichia vulneris).